The chain runs to 249 residues: Aquaporin TIP4-3 (249 aa).

2 consecutive transmembrane segments (helical) span residues 20–40 (GVLG…GAAM) and 56–76 (TAVA…GFHI). Residues 82–84 (NPA) carry the NPA 1 motif. The next 3 helical transmembrane spans lie at 100–122 (SSLY…RWLT), 141–161 (GVVA…ATIL), and 169–189 (GAGP…GAAL). Positions 195–197 (NPA) match the NPA 2 motif. Residues 214–234 (VYWVGPLAGGPLAVLVYECCF) form a helical membrane-spanning segment.

Belongs to the MIP/aquaporin (TC 1.A.8) family. TIP (TC 1.A.8.10) subfamily.

It is found in the vacuole membrane. In terms of biological role, aquaporins facilitate the transport of water and small neutral solutes across cell membranes. This chain is Aquaporin TIP4-3 (TIP4-3), found in Zea mays (Maize).